Consider the following 397-residue polypeptide: Acetate kinase 2 (397 aa).

Residue N8 participates in Mg(2+) binding. ATP is bound at residue K15. Residue R89 participates in substrate binding. The Proton donor/acceptor role is filled by D146. ATP-binding positions include 206 to 210 (HLGNG), 281 to 283 (DLR), and 329 to 333 (GIGEN). Position 382 (E382) interacts with Mg(2+).

It belongs to the acetokinase family. In terms of assembly, homodimer. Mg(2+) is required as a cofactor. It depends on Mn(2+) as a cofactor.

It is found in the cytoplasm. The enzyme catalyses acetate + ATP = acetyl phosphate + ADP. Its pathway is metabolic intermediate biosynthesis; acetyl-CoA biosynthesis; acetyl-CoA from acetate: step 1/2. In terms of biological role, catalyzes the formation of acetyl phosphate from acetate and ATP. Can also catalyze the reverse reaction. The sequence is that of Acetate kinase 2 from Listeria monocytogenes serotype 4b (strain F2365).